A 264-amino-acid chain; its full sequence is Undecaprenyl-diphosphatase (264 aa).

The next 8 membrane-spanning stretches (helical) occupy residues 7–27, 39–59, 89–109, 112–132, 145–165, 182–202, 212–232, and 244–264; these read VVIL…SSGH, LPIV…MIYY, ILLI…IEMF, LFTL…LFLL, ILLA…PGIS, SESF…SLLL, MLFS…VGLF, and SKLY…YFLF.

This sequence belongs to the UppP family.

The protein localises to the cell inner membrane. It catalyses the reaction di-trans,octa-cis-undecaprenyl diphosphate + H2O = di-trans,octa-cis-undecaprenyl phosphate + phosphate + H(+). In terms of biological role, catalyzes the dephosphorylation of undecaprenyl diphosphate (UPP). Confers resistance to bacitracin. This chain is Undecaprenyl-diphosphatase, found in Borrelia hermsii (strain HS1 / DAH).